A 738-amino-acid chain; its full sequence is Melanotransferrin (738 aa).

An N-terminal signal peptide occupies residues 1 to 19 (MRGPSGALWLLLALRTVLG). The antigenic epitope stretch occupies residues 20–30 (GMEVRWCATSD). 2 Transferrin-like domains span residues 23-357 (VRWC…GLLC) and 366-706 (LRWC…GMSS). Intrachain disulfides connect Cys-26/Cys-63 and Cys-36/Cys-54. Asn-38 carries an N-linked (GlcNAc...) asparagine glycan. Residues Asp-78 and Tyr-107 each coordinate Fe(3+). 4 cysteine pairs are disulfide-bonded: Cys-130–Cys-216, Cys-172–Cys-189, Cys-186–Cys-199, and Cys-257–Cys-271. Residue Thr-132 coordinates hydrogencarbonate. A glycan (N-linked (GlcNAc...) asparagine) is linked at Asn-135. The hydrogencarbonate site is built by Arg-136, Val-138, and Gly-139. Residue Tyr-210 participates in Fe(3+) binding. Residues His-279, Ser-421, and Tyr-451 each contribute to the Fe(3+) site. Ser-462 carries the phosphoserine; by FAM20C modification. An N-linked (GlcNAc...) asparagine glycan is attached at Asn-515. Residues Tyr-556 and His-625 each contribute to the Fe(3+) site. The GPI-anchor amidated cysteine moiety is linked to residue Cys-709. The propeptide at 710 to 738 (SGAAAPAPGAPLLPLLLPALAARLLPPAL) is removed in mature form.

Belongs to the transferrin family. Found predominantly in human melanomas and in certain fetal tissues; also found in liver, epithelium, umbilical chord, placenta and sweat gland ducts.

It localises to the cell membrane. Functionally, involved in iron cellular uptake. Seems to be internalized and then recycled back to the cell membrane. Binds a single atom of iron per subunit. Could also bind zinc. This is Melanotransferrin from Homo sapiens (Human).